A 121-amino-acid chain; its full sequence is Basic phospholipase A2 homolog BnSP-7 (121 aa).

Disulfide bonds link Cys-26/Cys-115, Cys-28/Cys-44, Cys-43/Cys-95, Cys-49/Cys-121, Cys-50/Cys-88, Cys-57/Cys-81, and Cys-75/Cys-86. The important for membrane-damaging activities in eukaryotes and bacteria; heparin-binding stretch occupies residues 105–117 (KKYRYHLKPFCKK).

The protein belongs to the phospholipase A2 family. Group II subfamily. K49 sub-subfamily. As to quaternary structure, homodimer; non-covalently linked (probable alternative/compact dimer conformation in solution). In terms of tissue distribution, expressed by the venom gland.

It is found in the secreted. Its activity is regulated as follows. Heparin inhibits the neuromuscular effect, myotoxin activity and edema-inducing effects. Bromophenacyl bromide (BPB) inhibits the neuromuscular effect, the myotoxin activity and edema-inducing effects. Snake venom phospholipase A2 (PLA2) that lacks enzymatic activity. Is myotoxic and displays edema-inducing activity. Displays bactericidal activity and promotes the blockage of the neuromuscular contraction of the chick biventer cervicis muscle. Also disrupts artificial membranes, and provokes tissue damages characterized by edema, necrosis and inflammation. May act as pro-inflammatory mediators, inducing metalloproteinase and cytokine production from the inflammatory and satellite cells. A model of myotoxic mechanism has been proposed: an apo Lys49-PLA2 is activated by the entrance of a hydrophobic molecule (e.g. fatty acid) at the hydrophobic channel of the protein leading to a reorientation of a monomer. This reorientation causes a transition between 'inactive' to 'active' states, causing alignment of C-terminal and membrane-docking sites (MDoS) side-by-side and putting the membrane-disruption sites (MDiS) in the same plane, exposed to solvent and in a symmetric position for both monomers. The MDoS region stabilizes the toxin on membrane by the interaction of charged residues with phospholipid head groups. Subsequently, the MDiS region destabilizes the membrane with penetration of hydrophobic residues. This insertion causes a disorganization of the membrane, allowing an uncontrolled influx of ions (i.e. calcium and sodium), and eventually triggering irreversible intracellular alterations and cell death. The chain is Basic phospholipase A2 homolog BnSP-7 from Bothrops pauloensis (Neuwied's lancehead).